The sequence spans 160 residues: uncharacterized protein (160 aa).

In terms of domain architecture, N-acetyltransferase spans 7–151 (LLINFKTLEE…NPYIWHPDMD (145 aa)).

This is an uncharacterized protein from Bacillus velezensis (strain DSM 23117 / BGSC 10A6 / LMG 26770 / FZB42) (Bacillus amyloliquefaciens subsp. plantarum).